Consider the following 714-residue polypeptide: Rho-GTPase-activating protein RGD2 (714 aa).

In terms of domain architecture, F-BAR spans 2–441 (LSFCDYFWSE…LENDIDPTAD (440 aa)). The DEP domain maps to 218 to 298 (PKTDYKLPLI…WKNTAYMFAN (81 aa)). The Rho-GAP domain maps to 475–704 (VDLETRCRLD…DLLTHKKQIF (230 aa)).

Interacts with CDC42 and RHO5.

Acts in signal transduction. Activates CDC42 and RHO5. The chain is Rho-GTPase-activating protein RGD2 (RGD2) from Saccharomyces cerevisiae (strain ATCC 204508 / S288c) (Baker's yeast).